A 348-amino-acid polypeptide reads, in one-letter code: D-alanine--D-alanine ligase (348 aa).

One can recognise an ATP-grasp domain in the interval 132–334; sequence KRVLESIGIP…YPDLIEELVT (203 aa). 162–217 serves as a coordination point for ATP; the sequence is LARLTFPIFVKPANMGSSVGISKAQTKVELRKAIQLALTYDSRVLIEQGVVAREIE. The Mg(2+) site is built by Asp-288, Glu-301, and Asn-303.

Belongs to the D-alanine--D-alanine ligase family. Mg(2+) is required as a cofactor. Requires Mn(2+) as cofactor.

It is found in the cytoplasm. The catalysed reaction is 2 D-alanine + ATP = D-alanyl-D-alanine + ADP + phosphate + H(+). It functions in the pathway cell wall biogenesis; peptidoglycan biosynthesis. Cell wall formation. This Streptococcus pyogenes serotype M3 (strain SSI-1) protein is D-alanine--D-alanine ligase.